Reading from the N-terminus, the 563-residue chain is Arginine--tRNA ligase (563 aa).

A 'HIGH' region motif is present at residues P120–H130.

It belongs to the class-I aminoacyl-tRNA synthetase family. In terms of assembly, monomer.

It localises to the cytoplasm. The catalysed reaction is tRNA(Arg) + L-arginine + ATP = L-arginyl-tRNA(Arg) + AMP + diphosphate. The protein is Arginine--tRNA ligase of Clostridium acetobutylicum (strain ATCC 824 / DSM 792 / JCM 1419 / IAM 19013 / LMG 5710 / NBRC 13948 / NRRL B-527 / VKM B-1787 / 2291 / W).